A 479-amino-acid polypeptide reads, in one-letter code: Cell division protein FtsA (479 aa).

A disordered region spans residues 417–458; sequence QGRQTERKENEQRDNTDRQREDTPKQTVKKKEKTGPSFGDKL. The segment covering 420–440 has biased composition (basic and acidic residues); that stretch reads QTERKENEQRDNTDRQREDTP.

It belongs to the FtsA/MreB family. In terms of assembly, self-interacts. Interacts with FtsZ.

It localises to the cell inner membrane. Its function is as follows. Cell division protein that is involved in the assembly of the Z ring. May serve as a membrane anchor for the Z ring. The chain is Cell division protein FtsA from Porphyromonas gingivalis (strain ATCC BAA-308 / W83).